The following is a 357-amino-acid chain: Protein RecA (357 aa).

74 to 81 (GPESSGKT) lines the ATP pocket.

The protein belongs to the RecA family.

Its subcellular location is the cytoplasm. In terms of biological role, can catalyze the hydrolysis of ATP in the presence of single-stranded DNA, the ATP-dependent uptake of single-stranded DNA by duplex DNA, and the ATP-dependent hybridization of homologous single-stranded DNAs. It interacts with LexA causing its activation and leading to its autocatalytic cleavage. The sequence is that of Protein RecA from Bordetella petrii (strain ATCC BAA-461 / DSM 12804 / CCUG 43448).